Here is a 498-residue protein sequence, read N- to C-terminus: MEKYILSIDQGTTSSRAILFNQKGEIAGVAQREFKQYFPQSGWVEHDANEIWTSVLAVMTEVINENDVRADQIAGIGITNQRETTVVWDKHTGRPIYHAIVWQSRQTQSICSELKQQGYEQTFRDKTGLLLDPYFAGTKVKWILDNVEGAREKAENGDLLFGTIDTWLVWKLSGKAAHITDYSNASRTLMFNIHDLEWDDELLELLTVPKNMLPEVKASSEVYGKTIDYHFYGQEVPIAGVAGDQQAALFGQACFERGDVKNTYGTGGFMLMNTGDKAVKSESGLLTTIAYGIDGKVNYALEGSIFVSGSAIQWLRDGLRMINSAPQSESYATRVDSTEGVYVVPAFVGLGTPYWDSEARGAIFGLTRGTEKEHFIRATLESLCYQTRDVMEAMSKDSGIDVQSLRVDGGAVKNNFIMQFQADIVNTSVERPEIQETTALGAAFLAGLAVGFWESKDDIAKNWKLEEKFDPKMDEGEREKLYRGWKKAVEATQVFKTE.

T12 contacts ADP. Residues T12, T13, and S14 each coordinate ATP. T12 contributes to the sn-glycerol 3-phosphate binding site. R16 is an ADP binding site. 3 residues coordinate sn-glycerol 3-phosphate: R82, E83, and Y134. Glycerol is bound by residues R82, E83, and Y134. The residue at position 230 (H230) is a Phosphohistidine; by HPr. D244 contributes to the sn-glycerol 3-phosphate binding site. D244 and Q245 together coordinate glycerol. ADP contacts are provided by T266, G309, Q313, G410, and N414. The ATP site is built by T266, G309, Q313, and G410.

It belongs to the FGGY kinase family. Homotetramer and homodimer (in equilibrium). In terms of processing, the phosphoenolpyruvate-dependent sugar phosphotransferase system (PTS), including enzyme I, and histidine-containing protein (HPr) are required for the phosphorylation, which leads to the activation of the enzyme.

It carries out the reaction glycerol + ATP = sn-glycerol 3-phosphate + ADP + H(+). Its pathway is polyol metabolism; glycerol degradation via glycerol kinase pathway; sn-glycerol 3-phosphate from glycerol: step 1/1. Its activity is regulated as follows. Activated by phosphorylation and inhibited by fructose 1,6-bisphosphate (FBP). Its function is as follows. Key enzyme in the regulation of glycerol uptake and metabolism. Catalyzes the phosphorylation of glycerol to yield sn-glycerol 3-phosphate. The polypeptide is Glycerol kinase (Staphylococcus aureus (strain COL)).